The primary structure comprises 206 residues: Small ribosomal subunit protein uS4 (206 aa).

Residues 96–157 (RRLDNVVYRM…KAKKQVRIQD (62 aa)) enclose the S4 RNA-binding domain.

This sequence belongs to the universal ribosomal protein uS4 family. In terms of assembly, part of the 30S ribosomal subunit. Contacts protein S5. The interaction surface between S4 and S5 is involved in control of translational fidelity.

In terms of biological role, one of the primary rRNA binding proteins, it binds directly to 16S rRNA where it nucleates assembly of the body of the 30S subunit. Functionally, with S5 and S12 plays an important role in translational accuracy. This Thioalkalivibrio sulfidiphilus (strain HL-EbGR7) protein is Small ribosomal subunit protein uS4.